Consider the following 165-residue polypeptide: Protein SprT (165 aa).

The SprT-like domain occupies 20 to 163 (EKLAQANLKL…RCVHCGEQLV (144 aa)). His78 contributes to the Zn(2+) binding site. The active site involves Glu79. Zn(2+) is bound at residue His82.

Belongs to the SprT family. It depends on Zn(2+) as a cofactor.

It localises to the cytoplasm. This is Protein SprT from Escherichia coli (strain K12 / MC4100 / BW2952).